The chain runs to 149 residues: Transcriptional repressor NrdR (149 aa).

Residues 3-34 (CPYCSYEESKVVDSRSAEDYNAIRRRRECLRC) fold into a zinc finger. The ATP-cone domain occupies 49–139 (ILVIKKDLSR…VYRQFKDINT (91 aa)).

It belongs to the NrdR family. Requires Zn(2+) as cofactor.

Negatively regulates transcription of bacterial ribonucleotide reductase nrd genes and operons by binding to NrdR-boxes. In Clostridium perfringens (strain ATCC 13124 / DSM 756 / JCM 1290 / NCIMB 6125 / NCTC 8237 / Type A), this protein is Transcriptional repressor NrdR.